A 219-amino-acid chain; its full sequence is Charged multivesicular body protein 5 (219 aa).

A coiled-coil region spans residues 22–153 (TNVDGRAESI…EIQEALSRSY (132 aa)).

This sequence belongs to the SNF7 family. Probable peripherally associated component of the endosomal sorting required for transport complex III (ESCRT-III).

The protein resides in the cytoplasm. The protein localises to the cytosol. Its subcellular location is the endosome membrane. Functionally, probable peripherally associated component of the endosomal sorting required for transport complex III (ESCRT-III) which is involved in multivesicular bodies (MVBs) formation and sorting of endosomal cargo proteins into MVBs. MVBs contain intraluminal vesicles (ILVs) that are generated by invagination and scission from the limiting membrane of the endosome and mostly are delivered to lysosomes enabling degradation of membrane proteins, such as stimulated growth factor receptors, lysosomal enzymes and lipids. The chain is Charged multivesicular body protein 5 (chmp5) from Xenopus laevis (African clawed frog).